The chain runs to 156 residues: Small ribosomal subunit protein uS10m (156 aa).

The protein belongs to the universal ribosomal protein uS10 family.

Its subcellular location is the mitochondrion. In terms of biological role, ribosomal protein required for normal mitochondrial function and normal larval development. Thought to have a role in insulin/IGF signaling. The polypeptide is Small ribosomal subunit protein uS10m (mrps-10) (Caenorhabditis elegans).